The sequence spans 280 residues: Lacto-N-neotetraose biosynthesis glycosyltransferase LgtE (280 aa).

The protein belongs to the glycosyltransferase 25 family.

The protein operates within glycan metabolism; lacto-N-neotetraose biosynthesis. It functions in the pathway bacterial outer membrane biogenesis; lipooligosaccharide biosynthesis. Functionally, adds the first galactose to the lacto-N-tetraose chain in lipooligosaccharide (LOS). In Neisseria meningitidis serogroup B (strain ATCC BAA-335 / MC58), this protein is Lacto-N-neotetraose biosynthesis glycosyltransferase LgtE (lgtE).